Here is an 854-residue protein sequence, read N- to C-terminus: Envelope glycoprotein gp160 (854 aa).

The N-terminal stretch at 1-20 (MGRLLIKILIIAIGISIGIG) is a signal peptide. The Extracellular segment spans residues 21–705 (NLYVTVFYGI…IILGLRFAWV (685 aa)). Residue asparagine 35 is glycosylated (N-linked (GlcNAc...) asparagine; by host). Cysteine 42 and cysteine 55 are oxidised to a cystine. N-linked (GlcNAc...) asparagine; by host glycosylation is found at asparagine 68, asparagine 115, asparagine 136, asparagine 153, asparagine 168, asparagine 182, and asparagine 199. Disulfide bonds link cysteine 99-cysteine 207, cysteine 106-cysteine 198, cysteine 111-cysteine 154, cysteine 220-cysteine 250, and cysteine 230-cysteine 242. The V1 stretch occupies residues 111–153 (CVELNGTATTKATTTATTTMTTPCQNCSTEQIEGEMAEEPASN). Residues 154–198 (CTFAIAGYQRDVKKNYSMTWYDQELVCNNKTGSEKGSKDCYMIHC) are V2. Residues asparagine 244, asparagine 255, asparagine 265, asparagine 271, asparagine 283, asparagine 295, asparagine 305, asparagine 355, asparagine 400, asparagine 409, asparagine 458, asparagine 472, and asparagine 478 are each glycosylated (N-linked (GlcNAc...) asparagine; by host). Positions 300–332 (CRRPGNKTVLPVTIMAGLVFHSQKYNTRLKQAW) are V3. A disulfide bridge connects residues cysteine 300 and cysteine 333. Intrachain disulfides connect cysteine 382–cysteine 457 and cysteine 389–cysteine 430. A V4 region spans residues 389 to 430 (CKMDWFINYLNNRTEDAEGTNRTCDKGKPGPGPCVQRTYVAC). The V5 stretch occupies residues 473–481 (KSGPINVTL). The tract at residues 523–543 (VPFVLGFLGFLGAAGTAMGAA) is fusion peptide. Positions 586-602 (LNARVTALEKYLEDQAR) are immunosuppression. 2 N-linked (GlcNAc...) asparagine; by host glycosylation sites follow: asparagine 630 and asparagine 646. The stretch at 633–672 (WLEWERQINALEGNITQLLEEAQNQESKNLDLYQKLDDWS) forms a coiled coil. An MPER; binding to GalCer region spans residues 667–688 (KLDDWSGFWSWFSLSTWLGYVK). Residues 706–726 (LWGCIRNIRQGYNPLPQIHIH) form a helical membrane-spanning segment. A YXXL motif; contains endocytosis signal motif is present at residues 717 to 720 (YNPL). Over 727–854 (SSAERPDNGG…VRQGLEKVLG (128 aa)) the chain is Cytoplasmic.

As to quaternary structure, the mature envelope protein (Env) consists of a homotrimer of non-covalently associated gp120-gp41 heterodimers. The resulting complex protrudes from the virus surface as a spike. Interacts with host CD4 and CCR5. Gp120 also interacts with the C-type lectins CD209/DC-SIGN and CLEC4M/DC-SIGNR (collectively referred to as DC-SIGN(R)). In terms of assembly, the mature envelope protein (Env) consists of a homotrimer of non-covalently associated gp120-gp41 heterodimers. The resulting complex protrudes from the virus surface as a spike. Specific enzymatic cleavages in vivo yield mature proteins. Envelope glycoproteins are synthesized as an inactive precursor that is heavily N-glycosylated and processed likely by host cell furin in the Golgi to yield the mature SU and TM proteins. The cleavage site between SU and TM requires the minimal sequence [KR]-X-[KR]-R.

Its subcellular location is the virion membrane. It localises to the host cell membrane. It is found in the host endosome membrane. In terms of biological role, the surface protein gp120 (SU) attaches the virus to the host lymphoid cell by binding to the primary receptor CD4. This interaction induces a structural rearrangement creating a high affinity binding site for a chemokine coreceptor like CCR5. This peculiar 2 stage receptor-interaction strategy allows gp120 to maintain the highly conserved coreceptor-binding site in a cryptic conformation, protected from neutralizing antibodies. These changes are transmitted to the transmembrane protein gp41 and are thought to activate its fusogenic potential by unmasking its fusion peptide. Its function is as follows. Surface protein gp120 (SU) may target the virus to gut-associated lymphoid tissue (GALT) by binding host ITGA4/ITGB7 (alpha-4/beta-7 integrins), a complex that mediates T-cell migration to the GALT. Interaction between gp120 and ITGA4/ITGB7 would allow the virus to enter GALT early in the infection, infecting and killing most of GALT's resting CD4+ T-cells. This T-cell depletion is believed to be the major insult to the host immune system leading to AIDS. The surface protein gp120 is a ligand for CD209/DC-SIGN and CLEC4M/DC-SIGNR, which are respectively found on dendritic cells (DCs), and on endothelial cells of liver sinusoids and lymph node sinuses. These interactions allow capture of viral particles at mucosal surfaces by these cells and subsequent transmission to permissive cells. DCs are professional antigen presenting cells, critical for host immunity by inducing specific immune responses against a broad variety of pathogens. They act as sentinels in various tissues where they take up antigen, process it, and present it to T-cells following migration to lymphoid organs. SIV subverts the migration properties of dendritic cells to gain access to CD4+ T-cells in lymph nodes. Virus transmission to permissive T-cells occurs either in trans (without DCs infection, through viral capture and transmission), or in cis (following DCs productive infection, through the usual CD4-gp120 interaction), thereby inducing a robust infection. In trans infection, bound virions remain infectious over days and it is proposed that they are not degraded, but protected in non-lysosomal acidic organelles within the DCs close to the cell membrane thus contributing to the viral infectious potential during DCs' migration from the periphery to the lymphoid tissues. On arrival at lymphoid tissues, intact virions recycle back to DCs' cell surface allowing virus transmission to CD4+ T-cells. Virion capture also seems to lead to MHC-II-restricted viral antigen presentation, and probably to the activation of SIV-specific CD4+ cells. Functionally, the transmembrane protein gp41 (TM) acts as a class I viral fusion protein. Under the current model, the protein has at least 3 conformational states: pre-fusion native state, pre-hairpin intermediate state, and post-fusion hairpin state. During fusion of viral and target intracellular membranes, the coiled coil regions (heptad repeats) assume a trimer-of-hairpins structure, positioning the fusion peptide in close proximity to the C-terminal region of the ectodomain. The formation of this structure appears to drive apposition and subsequent fusion of viral and target cell membranes. Complete fusion occurs in host cell endosomes. The virus undergoes clathrin-dependent internalization long before endosomal fusion, thus minimizing the surface exposure of conserved viral epitopes during fusion and reducing the efficacy of inhibitors targeting these epitopes. Membranes fusion leads to delivery of the nucleocapsid into the cytoplasm. In terms of biological role, the envelope glycoprotein gp160 precursor down-modulates cell surface CD4 antigen by interacting with it in the endoplasmic reticulum and blocking its transport to the cell surface. Its function is as follows. The gp120-gp41 heterodimer allows rapid transcytosis of the virus through CD4 negative cells such as simple epithelial monolayers of the intestinal, rectal and endocervical epithelial barriers. Both gp120 and gp41 specifically recognize glycosphingolipids galactosyl-ceramide (GalCer) or 3' sulfo-galactosyl-ceramide (GalS) present in the lipid rafts structures of epithelial cells. Binding to these alternative receptors allows the rapid transcytosis of the virus through the epithelial cells. This transcytotic vesicle-mediated transport of virions from the apical side to the basolateral side of the epithelial cells does not involve infection of the cells themselves. This Cercopithecidae (Old World monkeys) protein is Envelope glycoprotein gp160 (env).